The sequence spans 91 residues: MQRNLVVLLFLGMVALSSCGLREKHFQKLVKYAVPEGTLRTIIQTAVHKLGKTQFGCPAYQGYCDDHCQDIKKEEGFCHGFKCKCGIPMGF.

A signal peptide spans 1-19 (MQRNLVVLLFLGMVALSSC). Residues 20 to 27 (GLREKHFQ) constitute a propeptide that is removed on maturation. Residues 54–91 (QFGCPAYQGYCDDHCQDIKKEEGFCHGFKCKCGIPMGF) form the BetaSPN-type CS-alpha/beta domain. Cystine bridges form between cysteine 57-cysteine 78, cysteine 64-cysteine 83, and cysteine 68-cysteine 85.

This sequence belongs to the long chain scorpion toxin family. Class 1 subfamily. In terms of tissue distribution, expressed by the venom gland.

It is found in the secreted. Functionally, inhibits voltage-gated potassium channel. This chain is Potassium channel toxin BmTXK-beta-2, found in Olivierus martensii (Manchurian scorpion).